Here is a 103-residue protein sequence, read N- to C-terminus: MYAVFQSGGKQHRVSEGQTVRLEKLDIATGEAVEFAEVLMIANGEEIKIGVPFVEGGVIKAEVVAHGRGEKVKIVKFRRRKHYRKQQGHRQWFTDVKITGISA.

The protein belongs to the bacterial ribosomal protein bL21 family. In terms of assembly, part of the 50S ribosomal subunit. Contacts protein L20.

Its function is as follows. This protein binds to 23S rRNA in the presence of protein L20. In Klebsiella pneumoniae (strain 342), this protein is Large ribosomal subunit protein bL21.